We begin with the raw amino-acid sequence, 79 residues long: Beta-defensin 15 (79 aa).

A signal peptide spans 1–20 (MKTFLFLFAVLFFLDPAKNA). 3 disulfide bridges follow: Cys-26–Cys-53, Cys-33–Cys-47, and Cys-37–Cys-54.

It belongs to the beta-defensin family. In terms of tissue distribution, expressed in testis and to a lesser extent in epididymis (caput, corpus and cauda). Also weakly expressed in kidneys and colon.

The protein localises to the secreted. In terms of biological role, has antibacterial activity. The chain is Beta-defensin 15 (Defb15) from Mus musculus (Mouse).